The chain runs to 240 residues: MGRAFEYRRAAKEKRWDKMSKVFPKLAKAITLAAKDGGGDPDTNAKLRTAILNAKAQNMPKDNIDAAIKRASSKEGNLSETTYEGKANFGVLIIMECMTDNPTRTVANLKSYFNKTQGASIVPNGSLEFMFNRKSVFECLKNEVENLKLSLEDLEFALIDYGLEELEEVGDKIIIRGDYNSFKLLNEGFESLKLPILKASLQRIATTPIELNDEQMELTEKLLDKIEDDDDVVALYTNIE.

Belongs to the TACO1 family.

It localises to the cytoplasm. This is Probable transcriptional regulatory protein Hac_0344 from Helicobacter acinonychis (strain Sheeba).